Consider the following 183-residue polypeptide: MATAQPSQVRQKYDTNCDAAINSHITLELYTSYLYLSMAFYFNRDDVALENFFRYFLRLSDDKMEHAQKLMRLQNLRGGHICLHDIRKPECQGWESGLVAMESAFHLEKNVNQSLLDLYQLAVEKGDPQLCHFLESHYLHEQVKTIKELGGYVSNLRKICSPEAGLAEYLFDKLTLGGRVKET.

One can recognise a Ferritin-like diiron domain in the interval 11–160 (QKYDTNCDAA…GYVSNLRKIC (150 aa)). Fe cation-binding residues include glutamate 28, histidine 66, glutamate 108, and glutamine 142.

Belongs to the ferritin family. In terms of tissue distribution, testis specific. Also expressed in several cancers.

This is Ferritin heavy polypeptide-like 17 (FTHL17) from Homo sapiens (Human).